Reading from the N-terminus, the 199-residue chain is Recombination protein RecR (199 aa).

Residues 57 to 72 (CEICGNLDTKSICHIC) form a C4-type zinc finger. Residues 80–175 (STIAIVETVA…KISRLASGIP (96 aa)) form the Toprim domain.

The protein belongs to the RecR family.

May play a role in DNA repair. It seems to be involved in an RecBC-independent recombinational process of DNA repair. It may act with RecF and RecO. This Rickettsia prowazekii (strain Madrid E) protein is Recombination protein RecR.